A 417-amino-acid chain; its full sequence is Serine hydroxymethyltransferase (417 aa).

(6S)-5,6,7,8-tetrahydrofolate is bound by residues L121 and 125-127; that span reads GHL. Position 229 is an N6-(pyridoxal phosphate)lysine (K229). A (6S)-5,6,7,8-tetrahydrofolate-binding site is contributed by 355 to 357; it reads SPF.

This sequence belongs to the SHMT family. As to quaternary structure, homodimer. It depends on pyridoxal 5'-phosphate as a cofactor.

The protein resides in the cytoplasm. It carries out the reaction (6R)-5,10-methylene-5,6,7,8-tetrahydrofolate + glycine + H2O = (6S)-5,6,7,8-tetrahydrofolate + L-serine. It functions in the pathway one-carbon metabolism; tetrahydrofolate interconversion. The protein operates within amino-acid biosynthesis; glycine biosynthesis; glycine from L-serine: step 1/1. Functionally, catalyzes the reversible interconversion of serine and glycine with tetrahydrofolate (THF) serving as the one-carbon carrier. This reaction serves as the major source of one-carbon groups required for the biosynthesis of purines, thymidylate, methionine, and other important biomolecules. Also exhibits THF-independent aldolase activity toward beta-hydroxyamino acids, producing glycine and aldehydes, via a retro-aldol mechanism. The chain is Serine hydroxymethyltransferase from Shewanella frigidimarina (strain NCIMB 400).